The chain runs to 186 residues: UPF0301 protein Swit_2673 (186 aa).

The protein belongs to the UPF0301 (AlgH) family.

The polypeptide is UPF0301 protein Swit_2673 (Rhizorhabdus wittichii (strain DSM 6014 / CCUG 31198 / JCM 15750 / NBRC 105917 / EY 4224 / RW1) (Sphingomonas wittichii)).